Here is a 473-residue protein sequence, read N- to C-terminus: Probable glucose-6-phosphate 1-dehydrogenase C7.13c (473 aa).

The NADP(+) site is built by arginine 43, tyrosine 121, and lysine 144. Residues lysine 144, 174-178 (HYTAK), glutamate 213, and aspartate 232 contribute to the D-glucose 6-phosphate site. Histidine 237 (proton acceptor) is an active-site residue. Lysine 331 is a D-glucose 6-phosphate binding site. Lysine 341 provides a ligand contact to NADP(+). Glutamine 366 is a binding site for D-glucose 6-phosphate.

This sequence belongs to the glucose-6-phosphate dehydrogenase family.

It localises to the cytoplasm. The enzyme catalyses D-glucose 6-phosphate + NADP(+) = 6-phospho-D-glucono-1,5-lactone + NADPH + H(+). It functions in the pathway carbohydrate degradation; pentose phosphate pathway; D-ribulose 5-phosphate from D-glucose 6-phosphate (oxidative stage): step 1/3. Catalyzes the rate-limiting step of the oxidative pentose-phosphate pathway, which represents a route for the dissimilation of carbohydrates besides glycolysis. The main function of this enzyme is to provide reducing power (NADPH) and pentose phosphates for fatty acid and nucleic acid synthesis. This is Probable glucose-6-phosphate 1-dehydrogenase C7.13c from Schizosaccharomyces pombe (strain 972 / ATCC 24843) (Fission yeast).